The following is a 343-amino-acid chain: Probable dual-specificity RNA methyltransferase RlmN (343 aa).

Residue Glu90 is the Proton acceptor of the active site. In terms of domain architecture, Radical SAM core spans 96–325 (HEGYATACIS…AEIRYEKGAD (230 aa)). The cysteines at positions 103 and 330 are disulfide-linked. Cys110, Cys114, and Cys117 together coordinate [4Fe-4S] cluster. S-adenosyl-L-methionine contacts are provided by residues 157–158 (GE), Ser189, 212–214 (SLH), and Asn288. Residue Cys330 is the S-methylcysteine intermediate of the active site.

The protein belongs to the radical SAM superfamily. RlmN family. [4Fe-4S] cluster serves as cofactor.

Its subcellular location is the cytoplasm. It catalyses the reaction adenosine(2503) in 23S rRNA + 2 reduced [2Fe-2S]-[ferredoxin] + 2 S-adenosyl-L-methionine = 2-methyladenosine(2503) in 23S rRNA + 5'-deoxyadenosine + L-methionine + 2 oxidized [2Fe-2S]-[ferredoxin] + S-adenosyl-L-homocysteine. It carries out the reaction adenosine(37) in tRNA + 2 reduced [2Fe-2S]-[ferredoxin] + 2 S-adenosyl-L-methionine = 2-methyladenosine(37) in tRNA + 5'-deoxyadenosine + L-methionine + 2 oxidized [2Fe-2S]-[ferredoxin] + S-adenosyl-L-homocysteine. Its function is as follows. Specifically methylates position 2 of adenine 2503 in 23S rRNA and position 2 of adenine 37 in tRNAs. The chain is Probable dual-specificity RNA methyltransferase RlmN from Pseudothermotoga lettingae (strain ATCC BAA-301 / DSM 14385 / NBRC 107922 / TMO) (Thermotoga lettingae).